We begin with the raw amino-acid sequence, 176 residues long: NADH:riboflavin 5'-phosphate oxidoreductase (176 aa).

Functionally, provides the reduced form of flavin mononucleotide for the PIIA synthase reaction. This is NADH:riboflavin 5'-phosphate oxidoreductase (snaC) from Streptomyces pristinaespiralis.